Consider the following 356-residue polypeptide: Peptide chain release factor 1 (356 aa).

Gln233 is subject to N5-methylglutamine.

Belongs to the prokaryotic/mitochondrial release factor family. In terms of processing, methylated by PrmC. Methylation increases the termination efficiency of RF1.

Its subcellular location is the cytoplasm. Functionally, peptide chain release factor 1 directs the termination of translation in response to the peptide chain termination codons UAG and UAA. The protein is Peptide chain release factor 1 of Symbiobacterium thermophilum (strain DSM 24528 / JCM 14929 / IAM 14863 / T).